The sequence spans 446 residues: Transcription factor SOX-8 (446 aa).

3 disordered regions span residues 1 to 58, 155 to 259, and 318 to 378; these read MLDM…DPAE, AERL…RQNI, and HKSA…PFAG. Over residues 40–53 the composition is skewed to gly residues; it reads EGLGRAGVAVGGAR. Residues 58-100 are dimerization (DIM); the sequence is EAADERFPACIRDAVSQVLKGYDWSLVPMPVRGGGGGALKAKP. Residues 102–170 constitute a DNA-binding region (HMG box); the sequence is VKRPMNAFMV…QHKKDHPDYK (69 aa). Basic and acidic residues-rich tracts occupy residues 155–171, 210–219, and 242–253; these read AERL…DYKY, DGHHHGDHTG, and PELKLEGRRPVD. The transactivation domain (TAM) stretch occupies residues 224 to 298; sequence PPTPPTTPKT…LPLGGPAPPE (75 aa). The tract at residues 335–446 is transactivation domain (TAC); the sequence is RPHIKTEQPS…QPVYTTLTRP (112 aa). A compositionally biased stretch (low complexity) spans 362–378; it reads SGQSSATPAAPAGPFAG. Residues 400-408 carry the 9aaTAD motif; sequence PGLYQYPCF. The tract at residues 425–446 is disordered; sequence LPPAHSPTSHWDQPVYTTLTRP. Residues 430–446 show a composition bias toward polar residues; sequence SPTSHWDQPVYTTLTRP.

Its subcellular location is the nucleus. In terms of biological role, transcription factor that may play a role in central nervous system, limb and facial development. May be involved in male sex determination. Binds the consensus motif 5'-[AT][AT]CAA[AT]G-3'. This chain is Transcription factor SOX-8, found in Homo sapiens (Human).